We begin with the raw amino-acid sequence, 2092 residues long: MGSIESDSVLSFFSQRCCQNPDNTAIDDGPNGKLSYSQLDQQSSALAYCLQQNGITAGQVIPLLTTSRLEMVIAVLGILKAGGVYVPIDVDQWPADRINYVLSRTCSGLVVYTGDNIPSGVSLEEECRTVQVQIWPESALETQYEPNRRPQLMCIIFTSGTTDKPKGVMIPHSSVARFVTSPGFNYDIVPGDRLLLVLSVAFDGMGTLFNTICNGGTVILANRLNFQERSRQCTVLVVTPSILDVLSPPQSPSDYPSLERIFLGGETPSQQLLEAWSAFNDVALWIAYGPTEATCAVLSGRLQASSETGKFHPTRLGHCIPGSNVLLLTEEMETVQDRDTEGEICIEGPCLTDGYWQDENRTKDRFIEYQGRRVYRTGDLGRFVTTEDSETAIEFCGRRDRVTKIRGFLVNLELDVDAGLRRLDQNITAVFSVVLDKKLCTAVVPSSVDCRHLQAAWRLVAPPYLVPDKMVALNDLPLTANGKFDPRQVISILRDVMQKDAIMQNSISHDNPDANNRKQYSWHSGPLTIGQAILIGIQQVLGVSQGEINLKDSAVFQGVHSLAAAKLSTFCRHHGYNVSVESILTEPSLHSLIEKSRHETEDTPDSSAFATRTPEESSMPTQGPVTPLQKRMVLDSIVEDPRANCLQHISWYKMEDIGRLREAWKMVVTHEPVFQTSFELDDTQEPSQRLIGAGIFIWEETTVTTYAAIEESLKSLPAATGLGSRFRVLHCVGPEFPRSESIFVWAVHHALIDGYSASLVFEKVDKALKDEPFESSHPFTLAAQDIAQMRDKIAPEVDHFWKDQETQYPGAAGEPLIPEALTDQSGMDFAEHVANVSIDSQRLRFAAQQAQATPAAIFYAAWALLLSSYTNSDTVIFGAVFSGRNLPFSWAPCMVGPLLNILPLRCRIEREVESASFVREIHQTIQDISRFQVADRPKNTPPFASTLTVQDSGLRSGTTAISSLRNPEVRESNLLPLTVVVENDGQITFLYRTDRFSESHVKDMAAIYTSLLDAFLDPGRNLQDCMNRRFPIEMNRTILQTGNIDSEISRVPSVNGGHTLSSLFGMVASLYPTHVAVQKGPHSVTYATLVQCAARVAAVVEQKTQPGEVVAILADRSINWIVGIMGATIANTVYCPLDSSYPAEYREDLLRRSHAKLFLVPSRSQLPTADNGVTAISIEGILASDIEPLCPWRTQKPSDGAYICFTSGSTGVPKGVLCQHQGVVSLQSCSIEGRLHSKPGRRIAQFMSTGFDVCVHEVFASLCYGGTLVLRKDDDDPFSHLADVDVVSMNATVAGSLDPSEYSDLDYVYLAGEPIPQRTADKWAVDRELYNAYGPTEATIIVTRTRLEAGVPVAIGQPFPSVRAYILNDHRELQPPNTLGNLFVAGVQVSHGYLDLPEVTAKSYFPDPFLPESFNERMYDTGDIGFWDTDGKIQCCGRKDRQVKVRGFRINLDGISNMATLRMPTIRHAAAFVKDGGVVLCVEPEDVDTGELRSRLKDALPPHAIPRTIYSIAHIPLSLNGKIDVKSLAAMEVRNGTVPTNGVIKTTHLEKLIAQEWQQLLGLDPAQPLSRSDDFVLLGGDSIRQLNLAARLRSVLGLPIKVKDIIRSSTLGDLVILVAQQQEQHGKKNAPNGAPAHSIVDRPLGFKNLSPPEMEWACKYRHSQSQSTFNVSYVARLSPAVDWQRLASAFETVLNRHRVLRSRFAVRRDGSNERVLSEYPISVKRTVHDVNIQEVINQPFEIDSSEALIHTIVSPSTLVLCISHILCDLTSINTLLYEVADTYHGLTLSPVVREYFDVTWHHTVDQEKQRFWAEYLEGLSFKKPNLASQIREPRSYRGTSRTTSLSDSLYRRLIISSTKNGFTFHQFGMAVAGLVLHFLTGRDDIVLGSPFVNRPSFEDRQVIGLFLEPLPVRISVKHQNENNGGPDAREFVQSVRQSSQSALAHSVPWSELMSHLGLPFPSAQPQLFSCCVTFHDDRGTEPPLAIQGVEGQYVSAEGAKFPLLFEWQATRASEHEQLTVRLEYDTDWLSAEFVEILEALLLECFRILLEEEDSHHGEVKERLGEVLRSEATRIGVGVNEICEMARQHLMVV.

The tract at residues phenylalanine 13–arginine 406 is adenylation 1. The Carrier 1 domain maps to serine 524 to threonine 600. Residue serine 561 is modified to O-(pantetheine 4'-phosphoryl)serine. The interval serine 596–threonine 626 is disordered. Residues aspartate 605–proline 624 are compositionally biased toward polar residues. The segment at proline 624 to aspartate 1017 is condensation 1. An adenylation 2 region spans residues alanine 1068–arginine 1446. Residues isoleucine 1544–glutamine 1622 form the Carrier 2 domain. Serine 1582 is subject to O-(pantetheine 4'-phosphoryl)serine. The segment at serine 1663–isoleucine 2047 is condensation 2.

The protein belongs to the NRP synthetase family. Pantetheine 4'-phosphate is required as a cofactor.

It carries out the reaction L-tryptophan + L-alanine + 2 ATP = cyclo(L-tryptophyl-L-alanyl) + 2 ADP + 2 phosphate + 2 H(+). Its pathway is secondary metabolite biosynthesis. The protein operates within alkaloid biosynthesis. In terms of biological role, nonribosomal peptide synthetase; part of the gene cluster that mediates the biosynthesis of echinulin family alkaloid. The pathway begins with the biosynthesis of the cyclic dipeptide cyclo-L-Trp-L-Ala (cyclo-TA) by the NRPS echPS via condensation of L-alanine and L-tryptophan. The prenyltransferase echPT1 then catalyzes the first prenylation step, a reverse prenylation reaction at C2, to yield preechinulin. Preechinulin is the substrate of the cytochrome P450 monooxygenase echP450 that catalyzes the formation of the double bond between C10 and C11 to produce neoechulin A. The unique prenyltransferase echPT2 functions as a competitive enzyme with echP450 for preechinulin metabolization and uses preechinulin for effective regiospecific prenylations. Preechinulin is prenylated by echPT2 at C5 or C7. C7-prenylation leads to accumulation of tardioxopiperazine B without further modification by echPT2. In contrast, the C5-prenylated tardioxopiperazine A can be prenylated again by echPT2, predominantly at C7 to form echinulin or less frequently at C4 to give variecolorin L. EchPT2 also accepts neoechilunin A to produce varlecolorin G (prenylation at C5) or isoechinulin A (prenylation at C7). EchPT2 further converts isoechinulin A into dehydroechinulin. Moreover, a yet unidentified enzyme can also convert neoechilunin A into neoechilunin B by introducing a double bond between positions C14 and C17 and thus provides a further substrate to echPT2 for C5 and C7 prenylation. This Aspergillus ruber (strain CBS 135680) protein is Nonribosomal peptide synthetase echPS.